The following is a 378-amino-acid chain: Putative dioxygenase VC_1345 (378 aa).

Fe cation-binding residues include His288, Asp294, and His324.

Belongs to the homogentisate dioxygenase family. Fe cation serves as cofactor.

The polypeptide is Putative dioxygenase VC_1345 (Vibrio cholerae serotype O1 (strain ATCC 39315 / El Tor Inaba N16961)).